We begin with the raw amino-acid sequence, 74 residues long: uncharacterized protein (74 aa).

Residues 54-72 form a helical membrane-spanning segment; that stretch reads LIIPRFLLLIYSVIQCLFL.

The protein resides in the membrane. This is an uncharacterized protein from Saccharomyces cerevisiae (strain ATCC 204508 / S288c) (Baker's yeast).